Reading from the N-terminus, the 628-residue chain is Cytoplasmic dynein 1 intermediate chain 1 (628 aa).

Composition is skewed to basic and acidic residues over residues 1-13 (MSDKSDLKAELER) and 20-60 (QIRE…RETE). Residues 1–114 (MSDKSDLKAE…RTLQWDTDPS (114 aa)) are disordered. Residue Ser2 is modified to N-acetylserine. Phosphoserine is present on Ser50. Residues 70-79 (PEPPLVPTPM) show a composition bias toward pro residues. Residues 80 to 90 (SPSSKSVSTPS) are compositionally biased toward low complexity. Ser83 carries the phosphoserine modification. Residue Thr88 is modified to Phosphothreonine. Phosphoserine is present on residues Ser90, Ser94, and Ser97. Residues 105-114 (RTLQWDTDPS) show a composition bias toward polar residues. The tract at residues 130–146 (KLGVSKVTQVDFLPREV) is interaction with DYNLT1. The segment at 152 to 204 (ETQTPLATHQSEEDEEDEEMVEPKIGHDSELENQEKKQETKEAPPRELTEEEK) is disordered. Thr159 bears the Phosphothreonine mark. Ser162 and Ser180 each carry phosphoserine. A compositionally biased stretch (basic and acidic residues) spans 172 to 204 (VEPKIGHDSELENQEKKQETKEAPPRELTEEEK). 7 WD repeats span residues 268–317 (SKHR…TTPE), 321–361 (HCQS…RTPV), 370–411 (AHTH…TPQE), 420–460 (SKPV…AGIG), 465–510 (GHQG…PLYS), 513–553 (DNAD…EVPT), and 559–598 (EGASALNRVRWAQGGKEVAVGDSEGRIWIYDVGELAVPHN). Ser618 carries the phosphoserine modification.

The protein belongs to the dynein intermediate chain family. Homodimer. The cytoplasmic dynein 1 complex consists of two catalytic heavy chains (HCs) and a number of non-catalytic subunits presented by intermediate chains (ICs), light intermediate chains (LICs) and light chains (LCs); the composition seems to vary in respect to the IC, LIC and LC composition. The heavy chain homodimer serves as a scaffold for the probable homodimeric assembly of the respective non-catalytic subunits. The ICs and LICs bind directly to the HC dimer and the LCs assemble on the IC dimer. Interacts with DYNC1H1. Interacts with DYNLT1 and DYNLT3. Interacts with DCTN1. Interacts with DYNLL2. Interacts with MCRS1; the interaction is required for the proper distribution of centriolar satellites.

The protein resides in the cytoplasm. The protein localises to the chromosome. It localises to the centromere. Its subcellular location is the kinetochore. It is found in the cytoskeleton. The protein resides in the spindle pole. Acts as one of several non-catalytic accessory components of the cytoplasmic dynein 1 complex that are thought to be involved in linking dynein to cargos and to adapter proteins that regulate dynein function. Cytoplasmic dynein 1 acts as a motor for the intracellular retrograde motility of vesicles and organelles along microtubules. The intermediate chains mediate the binding of dynein to dynactin via its 150 kDa component (p150-glued) DCTN1. May play a role in mediating the interaction of cytoplasmic dynein with membranous organelles and kinetochores. This chain is Cytoplasmic dynein 1 intermediate chain 1 (Dync1i1), found in Mus musculus (Mouse).